A 229-amino-acid chain; its full sequence is Enolase-phosphatase E1 (229 aa).

Residues Asp-7 and Glu-9 each contribute to the Mg(2+) site. Residues 122-123 (SS) and Lys-161 each bind substrate. Asp-186 serves as a coordination point for Mg(2+).

The protein belongs to the HAD-like hydrolase superfamily. MasA/MtnC family. Monomer. Mg(2+) is required as a cofactor.

It localises to the cytoplasm. It is found in the nucleus. The enzyme catalyses 5-methylsulfanyl-2,3-dioxopentyl phosphate + H2O = 1,2-dihydroxy-5-(methylsulfanyl)pent-1-en-3-one + phosphate. It functions in the pathway amino-acid biosynthesis; L-methionine biosynthesis via salvage pathway; L-methionine from S-methyl-5-thio-alpha-D-ribose 1-phosphate: step 3/6. The protein operates within amino-acid biosynthesis; L-methionine biosynthesis via salvage pathway; L-methionine from S-methyl-5-thio-alpha-D-ribose 1-phosphate: step 4/6. Bifunctional enzyme that catalyzes the enolization of 2,3-diketo-5-methylthiopentyl-1-phosphate (DK-MTP-1-P) into the intermediate 2-hydroxy-3-keto-5-methylthiopentenyl-1-phosphate (HK-MTPenyl-1-P), which is then dephosphorylated to form the acireductone 1,2-dihydroxy-3-keto-5-methylthiopentene (DHK-MTPene). This chain is Enolase-phosphatase E1, found in Clavispora lusitaniae (strain ATCC 42720) (Yeast).